The following is a 156-amino-acid chain: MPRKGAVAKREVLPDPIYNSKLVTRLINRLMLDGKRGTASKILYQAFDIIKEQTGNEPLDVFEEAMKNIMPVLEVKARRVGGSNYQVPIEVRPDRRTTLGLRWLVQYSRLRGEHTMSERLAKEIMDAANNTGAAVKKREDTHKMADANRAFAHYRW.

Belongs to the universal ribosomal protein uS7 family. As to quaternary structure, part of the 30S ribosomal subunit. Contacts proteins S9 and S11.

Functionally, one of the primary rRNA binding proteins, it binds directly to 16S rRNA where it nucleates assembly of the head domain of the 30S subunit. Is located at the subunit interface close to the decoding center, probably blocks exit of the E-site tRNA. This chain is Small ribosomal subunit protein uS7, found in Ligilactobacillus salivarius (strain UCC118) (Lactobacillus salivarius).